The following is a 427-amino-acid chain: Enolase (427 aa).

A (2R)-2-phosphoglycerate-binding site is contributed by Gln163. Catalysis depends on Glu205, which acts as the Proton donor. Residues Asp242, Glu285, and Asp312 each contribute to the Mg(2+) site. (2R)-2-phosphoglycerate contacts are provided by Lys337, Arg366, Ser367, and Lys388. The active-site Proton acceptor is the Lys337.

It belongs to the enolase family. The cofactor is Mg(2+).

It is found in the cytoplasm. The protein resides in the secreted. It localises to the cell surface. It carries out the reaction (2R)-2-phosphoglycerate = phosphoenolpyruvate + H2O. It functions in the pathway carbohydrate degradation; glycolysis; pyruvate from D-glyceraldehyde 3-phosphate: step 4/5. Functionally, catalyzes the reversible conversion of 2-phosphoglycerate (2-PG) into phosphoenolpyruvate (PEP). It is essential for the degradation of carbohydrates via glycolysis. This is Enolase from Burkholderia ambifaria (strain MC40-6).